The following is a 154-amino-acid chain: Ribosome maturation factor RimP (154 aa).

Belongs to the RimP family.

It localises to the cytoplasm. Required for maturation of 30S ribosomal subunits. The polypeptide is Ribosome maturation factor RimP (Heliobacterium modesticaldum (strain ATCC 51547 / Ice1)).